Here is a 274-residue protein sequence, read N- to C-terminus: Large ribosomal subunit protein uL2 (274 aa).

The interval 223-265 (VVMNPVDHPHGGGEGRTSGGRHPVSPWGMPTKGFKTRKNKRTD) is disordered. Basic residues predominate over residues 256 to 265 (FKTRKNKRTD).

This sequence belongs to the universal ribosomal protein uL2 family. In terms of assembly, part of the 50S ribosomal subunit. Forms a bridge to the 30S subunit in the 70S ribosome.

Functionally, one of the primary rRNA binding proteins. Required for association of the 30S and 50S subunits to form the 70S ribosome, for tRNA binding and peptide bond formation. It has been suggested to have peptidyltransferase activity; this is somewhat controversial. Makes several contacts with the 16S rRNA in the 70S ribosome. The protein is Large ribosomal subunit protein uL2 of Vibrio parahaemolyticus serotype O3:K6 (strain RIMD 2210633).